A 278-amino-acid polypeptide reads, in one-letter code: 4-deoxy-L-threo-5-hexosulose-uronate ketol-isomerase (278 aa).

The Zn(2+) site is built by His196, His198, Glu203, and His245.

This sequence belongs to the KduI family. Zn(2+) serves as cofactor.

It carries out the reaction 5-dehydro-4-deoxy-D-glucuronate = 3-deoxy-D-glycero-2,5-hexodiulosonate. Its pathway is glycan metabolism; pectin degradation; 2-dehydro-3-deoxy-D-gluconate from pectin: step 4/5. Functionally, catalyzes the isomerization of 5-dehydro-4-deoxy-D-glucuronate to 3-deoxy-D-glycero-2,5-hexodiulosonate. This is 4-deoxy-L-threo-5-hexosulose-uronate ketol-isomerase from Salmonella agona (strain SL483).